The chain runs to 512 residues: MVSSLIYSLCAVSGLLATTVNGLPKKGHRAETSLPIVKQTKCGSHTYQYNGLVGYGTVPSNAVDKYGDTLGGFGSSIAIEQASWKKNSDGTYEGIAWAIPDRGWNTQGTLNVQSRIQKLGLKLTLAPGATVSNPSNPNLEIKLLDTLLLTDPDGTPMTGLDADFSGNISYPGFPGMPVATYPGDGFGGSGAGGRRISLDSEGIVIGNDGAFWVSDEYGPYVYKFSREGRMLQAIQPPDAYIPRRNGKVSFSAASPPIYEPDRQTDPEDPETGRNNNQGFEGLTISRDGKTLYVLIQSALNNDGGPKKRYRKQARMLEYDISGTTPKYTHEYVVTLATFVDPHEQDPSKATITASQSEIHYLPTGDFLILSRDSNAGRAAQYTESVYRHADIISKSTQTTDIKSKSNDKADGSIASSEGVLDDGINPLDYCSFVDYNLNSELGKFRLHNGGAQDEHLLNEKWESLALVPVDPSKEFEDNGKNEYFLISFSDNDYITQDGTSSSLLLFFSSASE.

The signal sequence occupies residues 1–22 (MVSSLIYSLCAVSGLLATTVNG). N-linked (GlcNAc...) asparagine glycosylation occurs at Asn-167. The disordered stretch occupies residues 251-282 (SAASPPIYEPDRQTDPEDPETGRNNNQGFEGL).

It localises to the secreted. This is an uncharacterized protein from Arthroderma benhamiae (strain ATCC MYA-4681 / CBS 112371) (Trichophyton mentagrophytes).